The primary structure comprises 493 residues: Cytochrome P450 monooxygenase esdpG (493 aa).

The chain crosses the membrane as a helical span at residues 10–30 (VLGVTWLSALFTLGSLSVFWL). A heme-binding site is contributed by Cys434.

This sequence belongs to the cytochrome P450 family. The cofactor is heme.

The protein localises to the membrane. Its pathway is secondary metabolite biosynthesis; terpenoid biosynthesis. In terms of biological role, cytochrome P450 monooxygenasee; part of the cluster that mediates the biosynthesis of shearones, diterpenoid pyrones (DPs) which are structurally diverse meroterpenoids consisting of a diterpene linked by a pyrone, and which may exhibit a range of bioactivities. Whitin the pathway, esdpG takes part in the molecular scaffold modification via the hydroxylation at C-11 and C-12 and can transform shearone A into shearone C and shearone B into shearone D. The molecular scaffold is commonly biosynthesized by a series of enzymes including the non-reducing polyketide synthase (NR-PKS) esdpA that generates an alpha-pyrone; the prenyltransferase esdpC that attaches a geranylgeranyl pyrophosphate (GGPP) produced by the GGPP synthase (GGPPS) esdpD onto the pyrone unit; the FAD-dependent monooxygenase esdpE that converts an olefin on the diterpene unit into an epoxide; and the terpene cyclase esdpB that catalyzes the cyclization reactions to give the molecular backbone shearone A. In the modification steps, esdpF oxidizes the hydroxy group to a ketone at C-3 and esdpG then attaches hydroxy groups at both C-11 and C-12. After that, esdpI hydroxylates at C-20 and esdpH hydroxylates at C-6'. The ether bridge is generated by nucleophilic attack of the hydroxy group at C-20 to the carbonyl carbon at C-3. EsdpH can also functions prior to esdpI. The different combinations of these modification enzymes lead to the production of diverse shearone derivatives, shearone I being the end product of the pathway. The alpha-ketoglutarate-dependent dioxygenase esdpJ seems not to be involved in this pathway. This chain is Cytochrome P450 monooxygenase esdpG, found in Penicillium shearii (Eupenicillium shearii).